The chain runs to 1826 residues: Kinesin-like protein KIF13B (1826 aa).

The region spanning lysine 5–isoleucine 353 is the Kinesin motor domain. Glycine 103–serine 110 is a binding site for ATP. Positions asparagine 364–serine 439 form a coiled coil. In terms of domain architecture, FHA spans threonine 471–glycine 535. The disordered stretch occupies residues lysine 546–serine 582. Residues serine 561–glutamine 570 show a composition bias toward polar residues. Coiled coils occupy residues methionine 607–arginine 710, serine 752–glutamate 772, and leucine 1096–alanine 1143. Serine 661 is modified (phosphoserine). The tract at residues glutamate 1367–serine 1420 is disordered. Polar residues-rich tracts occupy residues arginine 1378–arginine 1392 and glutamate 1409–serine 1420. Residue serine 1379 is modified to Phosphoserine. The residue at position 1381 (serine 1381) is a Phosphoserine; by MARK2. 2 positions are modified to phosphoserine: serine 1382 and serine 1391. At serine 1410 the chain carries Phosphoserine; by MARK2. Phosphoserine is present on residues serine 1432, serine 1438, and serine 1537. Threonine 1545 carries the post-translational modification Phosphothreonine. Serine 1559 bears the Phosphoserine mark. Positions serine 1579 to isoleucine 1607 are enriched in low complexity. Disordered regions lie at residues serine 1579–arginine 1650 and methionine 1662–proline 1698. Over residues serine 1608–proline 1624 the composition is skewed to pro residues. The residue at position 1644 (serine 1644) is a Phosphoserine. Low complexity predominate over residues proline 1671–alanine 1688. The 43-residue stretch at glycine 1721–arginine 1763 folds into the CAP-Gly domain. The residue at position 1797 (serine 1797) is a Phosphoserine.

The protein belongs to the TRAFAC class myosin-kinesin ATPase superfamily. Kinesin family. Binds to DLG1 and DLG4. Interacts (when phosphorylated at Ser-1381 and Ser-1410) with 14-3-3. Phosphorylated at Ser-1381 and Ser-1410 by MARK2, promoting interaction with 14-3-3 and inhibiting microtubule-dependent accumulation and formation of axons. As to expression, ubiquitous.

The protein localises to the cytoplasm. It is found in the cytoskeleton. The protein resides in the cell projection. It localises to the axon. Functionally, involved in reorganization of the cortical cytoskeleton. Regulates axon formation by promoting the formation of extra axons. May be functionally important for the intracellular trafficking of MAGUKs and associated protein complexes. This chain is Kinesin-like protein KIF13B (KIF13B), found in Homo sapiens (Human).